Here is a 228-residue protein sequence, read N- to C-terminus: PKHD-type hydroxylase XC_1340 (228 aa).

In terms of domain architecture, Fe2OG dioxygenase spans 78-180; it reads RIYPPLFNRY…RVASFFWIQS (103 aa). Fe cation-binding residues include histidine 96, aspartate 98, and histidine 161. Residue arginine 171 participates in 2-oxoglutarate binding.

It depends on Fe(2+) as a cofactor. L-ascorbate serves as cofactor.

This Xanthomonas campestris pv. campestris (strain 8004) protein is PKHD-type hydroxylase XC_1340.